We begin with the raw amino-acid sequence, 286 residues long: ATP synthase gamma chain (286 aa).

The protein belongs to the ATPase gamma chain family. In terms of assembly, F-type ATPases have 2 components, CF(1) - the catalytic core - and CF(0) - the membrane proton channel. CF(1) has five subunits: alpha(3), beta(3), gamma(1), delta(1), epsilon(1). CF(0) has three main subunits: a, b and c.

It localises to the cell membrane. Functionally, produces ATP from ADP in the presence of a proton gradient across the membrane. The gamma chain is believed to be important in regulating ATPase activity and the flow of protons through the CF(0) complex. This is ATP synthase gamma chain from Malacoplasma penetrans (strain HF-2) (Mycoplasma penetrans).